We begin with the raw amino-acid sequence, 542 residues long: Glucans biosynthesis protein D (542 aa).

The tat-type signal signal peptide spans 1 to 31; the sequence is MHRRNLLKASMAIAAYTGLSATGLLASRAWA.

Belongs to the OpgD/OpgG family. Post-translationally, predicted to be exported by the Tat system. The position of the signal peptide cleavage has not been experimentally proven.

It is found in the periplasm. It functions in the pathway glycan metabolism; osmoregulated periplasmic glucan (OPG) biosynthesis. Probably involved in the control of the structural glucose backbone of osmoregulated periplasmic glucans (OPGs). The chain is Glucans biosynthesis protein D from Pseudomonas fluorescens (strain Pf0-1).